The sequence spans 175 residues: NADH-quinone oxidoreductase subunit I (175 aa).

4Fe-4S ferredoxin-type domains are found at residues 44 to 74 (LNRY…VEGA) and 90 to 119 (RVYQ…MTND). C54, C57, C60, C64, C99, C102, C105, and C109 together coordinate [4Fe-4S] cluster. The interval 148–175 (PPHAMAPGATDEDYYRGTVSPSAEADAR) is disordered.

Belongs to the complex I 23 kDa subunit family. NDH-1 is composed of 14 different subunits. Subunits NuoA, H, J, K, L, M, N constitute the membrane sector of the complex. It depends on [4Fe-4S] cluster as a cofactor.

Its subcellular location is the cell membrane. It catalyses the reaction a quinone + NADH + 5 H(+)(in) = a quinol + NAD(+) + 4 H(+)(out). NDH-1 shuttles electrons from NADH, via FMN and iron-sulfur (Fe-S) centers, to quinones in the respiratory chain. The immediate electron acceptor for the enzyme in this species is believed to be menaquinone. Couples the redox reaction to proton translocation (for every two electrons transferred, four hydrogen ions are translocated across the cytoplasmic membrane), and thus conserves the redox energy in a proton gradient. The polypeptide is NADH-quinone oxidoreductase subunit I (Mycolicibacterium gilvum (strain PYR-GCK) (Mycobacterium gilvum (strain PYR-GCK))).